Here is a 589-residue protein sequence, read N- to C-terminus: Deoxynucleoside triphosphate triphosphohydrolase SAMHD1 (589 aa).

Position 1 is an N-acetylmethionine (Met-1). Positions 1–10 (MQSADSQNTP) are enriched in polar residues. The tract at residues 1-41 (MQSADSQNTPKRPRRDGSPRTPPDSPLADAETSPSHDLDPD) is disordered. A Phosphoserine modification is found at Ser-18. Position 21 is a phosphothreonine (Thr-21). Phosphoserine occurs at positions 33 and 88. The region spanning 45–100 (WGPEQVWSFLRRCGFSDSELLKRCREKRMSGSLLPFPEDLGISSHGKKMKLLNCIQ) is the SAM domain. GTP is bound by residues Lys-104 and Val-105. Asn-107 is a dGTP binding site. Residues Asp-125, Gln-130, and Arg-133 each coordinate GTP. 4 residues coordinate dGTP: Gln-137, Leu-138, Val-144, and Arg-152. Gln-137 serves as a coordination point for dATP. Residue Gln-137 participates in dCTP binding. Gln-137 lines the dTTP pocket. Arg-152 provides a ligand contact to dATP. Arg-152 serves as a coordination point for dCTP. Arg-152 contacts dTTP. Residues 152 to 277 (RFEHSLGVGY…IKDASKWLYK (126 aa)) enclose the HD domain. Mn(2+)-binding residues include His-155, His-194, and Asp-195. DATP is bound by residues His-198 and His-203. Residues His-198 and His-203 each coordinate dCTP. DTTP is bound by residues His-198 and His-203. The active site involves His-221. Residue Asp-300 participates in Mn(2+) binding. DGTP-binding residues include Lys-301, Tyr-304, Asp-308, Arg-322, Arg-341, Lys-343, Asn-347, Arg-355, Tyr-363, Gln-364, His-365, and Lys-366. DATP contacts are provided by Lys-301, Tyr-304, and Asp-308. DCTP contacts are provided by Lys-301, Tyr-304, and Asp-308. Positions 301, 304, and 308 each coordinate dTTP. Arg-355 lines the dATP pocket. Residue Arg-355 coordinates dCTP. Gln-364 serves as a coordination point for dATP. Gln-364 contributes to the dCTP binding site. Gln-364 is a dTTP binding site. The GTP site is built by Arg-440 and Lys-444. A Glycyl lysine isopeptide (Lys-Gly) (interchain with G-Cter in SUMO2) cross-link involves residue Lys-457. Lys-512 serves as a coordination point for GTP. Lys-512 is a dGTP binding site.

The protein belongs to the SAMHD1 family. In terms of assembly, homodimer; in absence of GTP and dNTP. Homotetramer; in GTP- and dNTP-bound form. Interacts with MRE11; leading to stimulate the exonuclease activity of MRE11. Interacts with RBBP8/CtIP. Interacts (via its C-terminus) with CD81. Requires Zn(2+) as cofactor.

Its subcellular location is the nucleus. It localises to the chromosome. The enzyme catalyses a 2'-deoxyribonucleoside 5'-triphosphate + H2O = a 2'-deoxyribonucleoside + triphosphate + H(+). It catalyses the reaction dATP + H2O = 2'-deoxyadenosine + triphosphate + H(+). The catalysed reaction is dCTP + H2O = 2'-deoxycytidine + triphosphate + H(+). It carries out the reaction dGTP + H2O = 2'-deoxyguanosine + triphosphate + H(+). The enzyme catalyses dTTP + H2O = thymidine + triphosphate + H(+). Allosterically activated and regulated via the combined actions of GTP and dNTPs (dATP, dGTP, dTTP and dCTP): Allosteric site 1 binds GTP, while allosteric site 2 binds dNTP. Allosteric activation promotes the formation of highly active homotetramers. Functionally, protein that acts both as a host restriction factor involved in defense response to virus and as a regulator of DNA end resection at stalled replication forks. Has deoxynucleoside triphosphate (dNTPase) activity, which is required to restrict infection by viruses: dNTPase activity reduces cellular dNTP levels to levels too low for retroviral reverse transcription to occur, blocking early-stage virus replication in dendritic and other myeloid cells. Likewise, suppresses LINE-1 retrotransposon activity. In addition to virus restriction, dNTPase activity acts as a regulator of DNA precursor pools by regulating dNTP pools. Functions during S phase at stalled DNA replication forks to promote the resection of gapped or reversed forks: acts by stimulating the exonuclease activity of MRE11, activating the ATR-CHK1 pathway and allowing the forks to restart replication. Its ability to promote degradation of nascent DNA at stalled replication forks is required to prevent induction of type I interferons, thereby preventing chronic inflammation. Ability to promote DNA end resection at stalled replication forks is independent of dNTPase activity. Enhances immunoglobulin hypermutation in B-lymphocytes by promoting transversion mutation. In Bos taurus (Bovine), this protein is Deoxynucleoside triphosphate triphosphohydrolase SAMHD1.